Here is a 63-residue protein sequence, read N- to C-terminus: Large ribosomal subunit protein bL28 (63 aa).

This sequence belongs to the bacterial ribosomal protein bL28 family.

The protein is Large ribosomal subunit protein bL28 of Clostridium acetobutylicum (strain ATCC 824 / DSM 792 / JCM 1419 / IAM 19013 / LMG 5710 / NBRC 13948 / NRRL B-527 / VKM B-1787 / 2291 / W).